Here is a 373-residue protein sequence, read N- to C-terminus: Nuclear migration protein JNM1 (373 aa).

A disordered region spans residues Glu33–Leu53. Ser91 carries the phosphoserine modification. 3 coiled-coil regions span residues Lys114–Glu139, Glu200–Asn245, and Trp331–Ala367.

In terms of assembly, component of the dynactin complex composed of at least ARP1, JNM1, NIP100 and ARP10. Dynactin comprises a short rod of ARP1 polymers attached to ARP10 at its pointed-end and probably associated with the capping protein at its barbed-end. The rod structure is implicated in dynein cargo binding. A sidearm formed by NIP100 projects from the ARP1 filament and is implicated in motor binding. Interacts with ARP1.

It localises to the cytoplasm. It is found in the cytoskeleton. Functionally, component of the dynactin complex which assists cytoplasmic dynein by increasing its processivity and by regulation of its cargo binding. The dynactin complex is required for the spindle translocation late in anaphase and is involved in a cell wall synthesis checkpoint. JNM1 is associated with the rod and links it to the projecting sidearm. Required for proper nuclear migration during the mitotic cell cycle and for astral microtubule development. This is Nuclear migration protein JNM1 (JNM1) from Saccharomyces cerevisiae (strain ATCC 204508 / S288c) (Baker's yeast).